The sequence spans 99 residues: Transmembrane protein 14A (99 aa).

3 helical membrane-spanning segments follow: residues 1–21 (MDLIGFGYAALVTFGSILGYK), 24–44 (GGVPSLIAGLFVGFLAGYGAY), and 79–99 (PAGLVAGLSLLMILRLVLLLL).

It belongs to the TMEM14 family.

It is found in the mitochondrion membrane. It localises to the endoplasmic reticulum membrane. Functionally, inhibits apoptosis via negative regulation of the mitochondrial outer membrane permeabilization involved in apoptotic signaling pathway. The chain is Transmembrane protein 14A (TMEM14A) from Sus scrofa (Pig).